The primary structure comprises 49 residues: Large ribosomal subunit protein eL40 (49 aa).

The protein belongs to the eukaryotic ribosomal protein eL40 family.

The polypeptide is Large ribosomal subunit protein eL40 (Natronomonas pharaonis (strain ATCC 35678 / DSM 2160 / CIP 103997 / JCM 8858 / NBRC 14720 / NCIMB 2260 / Gabara) (Halobacterium pharaonis)).